A 366-amino-acid polypeptide reads, in one-letter code: Ribosomal RNA large subunit methyltransferase M (366 aa).

S-adenosyl-L-methionine is bound by residues S188, 221–224 (CPGG), D240, D260, and D277. Catalysis depends on K306, which acts as the Proton acceptor.

It belongs to the class I-like SAM-binding methyltransferase superfamily. RNA methyltransferase RlmE family. RlmM subfamily. As to quaternary structure, monomer.

The protein resides in the cytoplasm. The enzyme catalyses cytidine(2498) in 23S rRNA + S-adenosyl-L-methionine = 2'-O-methylcytidine(2498) in 23S rRNA + S-adenosyl-L-homocysteine + H(+). Catalyzes the 2'-O-methylation at nucleotide C2498 in 23S rRNA. The chain is Ribosomal RNA large subunit methyltransferase M from Musicola paradisiaca (strain Ech703) (Dickeya paradisiaca).